A 380-amino-acid chain; its full sequence is Apelin receptor (380 aa).

The Extracellular segment spans residues 1–30 (MEEGGDFDNYYGADNQSECEYTDWKSSGAL). N15 carries an N-linked (GlcNAc...) asparagine glycan. 2 disulfide bridges follow: C19–C281 and C102–C181. The chain crosses the membrane as a helical span at residues 31-54 (IPAIYMLVFLLGTTGNGLVLWTVF). The Cytoplasmic portion of the chain corresponds to 55-64 (RSSREKRRSA). The chain crosses the membrane as a helical span at residues 65–86 (DIFIASLAVADLTFVVTLPLWA). Over 87-99 (TYTYRDYDWPFGT) the chain is Extracellular. A helical membrane pass occupies residues 100-125 (FSCKLSSYLIFVNMYASVFCLTGLSF). Residues 126–146 (DRYLAIVRPVANARLRLRVSG) are Cytoplasmic-facing. A helical transmembrane segment spans residues 147–164 (AVATAVLWVLAALLAMPV). Residues 165 to 198 (MVFRTTGDLENTTKVQCYMDYSMVATVSSDWAWE) lie on the Extracellular side of the membrane. An N-linked (GlcNAc...) asparagine glycan is attached at N175. Residues 199–223 (VGLGVSSTTVGFVVPFTIMLTCYFF) traverse the membrane as a helical segment. Over 224-246 (IAQTIAGHFRKERIEGLRKRRRL) the chain is Cytoplasmic. A helical membrane pass occupies residues 247–270 (LSIIVVLVVTFALCWMPYHLVKTL). Over 271–289 (YMLGSLLHWPCDFDLFLMN) the chain is Extracellular. Residues 290 to 312 (VFPYCTCISYVNSCLNPFLYAFF) form a helical membrane-spanning segment. At 313–380 (DPRFRQACTS…PYSQETLVVD (68 aa)) the chain is on the cytoplasmic side. Residues 342–351 (KSASYSSGHS) show a composition bias toward low complexity. The segment at 342 to 380 (KSASYSSGHSQGPGPNMGKGGEQMHEKSIPYSQETLVVD) is disordered. Polar residues predominate over residues 371 to 380 (PYSQETLVVD).

Belongs to the G-protein coupled receptor 1 family. Homodimer; dimerization inhibits APLNR-mediated G protein and beta-arrestin signaling pathways compared to monomeric APLNR.

It localises to the cell membrane. Functionally, g protein-coupled receptor for peptide hormones apelin (APLN) and apelin receptor early endogenous ligand (APELA/ELA), that plays a role in the regulation of normal cardiovascular function and fluid homeostasis. When acting as apelin receptor, activates both G(i) protein pathway that inhibits adenylate cyclase activity, and the beta-arrestin pathway that promotes internalization of the receptor. APLNR/APJ also functions as mechanoreceptor that is activated by pathological stimuli in a G-protein-independent fashion to induce beta-arrestin signaling, hence eliciting cardiac hypertrophy. However, the presence of apelin ligand blunts cardiac hypertrophic induction from APLNR/APJ on response to pathological stimuli. Plays a key role in early development such as gastrulation, blood vessels formation and heart morphogenesis by acting as a APELA receptor. May promote angioblast migration toward the embryonic midline, i.e. the position of the future vessel formation, during vasculogenesis. Promotes sinus venosus (SV)-derived endothelial cells migration into the developing heart to promote coronary blood vessel development. Also plays a role in various processes in adults such as regulation of blood vessel formation, blood pressure, heart contractility and heart failure. In terms of biological role, (Microbial infection) Alternative coreceptor with CD4 for HIV-1 infection; may be involved in the development of AIDS dementia. The sequence is that of Apelin receptor (APLNR) from Macaca mulatta (Rhesus macaque).